Consider the following 901-residue polypeptide: HTH-type transcriptional regulator MalT (901 aa).

ATP is bound at residue 39–46 (SPAGYGKT). In terms of domain architecture, HTH luxR-type spans 829-894 (ELIRTSPLTQ…AAVQHAQKLL (66 aa)). Positions 853 to 872 (NEQIAGELEVAATTIKTHIR) form a DNA-binding region, H-T-H motif.

This sequence belongs to the MalT family. As to quaternary structure, monomer in solution. Oligomerizes to an active state in the presence of the positive effectors ATP and maltotriose.

Its activity is regulated as follows. Activated by ATP and maltotriose, which are both required for DNA binding. Positively regulates the transcription of the maltose regulon whose gene products are responsible for uptake and catabolism of malto-oligosaccharides. Specifically binds to the promoter region of its target genes, recognizing a short DNA motif called the MalT box. This Escherichia coli O6:H1 (strain CFT073 / ATCC 700928 / UPEC) protein is HTH-type transcriptional regulator MalT.